We begin with the raw amino-acid sequence, 150 residues long: Large ribosomal subunit protein uL13 (150 aa).

It belongs to the universal ribosomal protein uL13 family. As to quaternary structure, part of the 50S ribosomal subunit.

Functionally, this protein is one of the early assembly proteins of the 50S ribosomal subunit, although it is not seen to bind rRNA by itself. It is important during the early stages of 50S assembly. The chain is Large ribosomal subunit protein uL13 from Chlamydia abortus (strain DSM 27085 / S26/3) (Chlamydophila abortus).